We begin with the raw amino-acid sequence, 304 residues long: Homoserine kinase (304 aa).

90–100 lines the ATP pocket; sequence PLARGLGSSAS.

The protein belongs to the GHMP kinase family. Homoserine kinase subfamily.

The protein resides in the cytoplasm. The catalysed reaction is L-homoserine + ATP = O-phospho-L-homoserine + ADP + H(+). It participates in amino-acid biosynthesis; L-threonine biosynthesis; L-threonine from L-aspartate: step 4/5. Its function is as follows. Catalyzes the ATP-dependent phosphorylation of L-homoserine to L-homoserine phosphate. The sequence is that of Homoserine kinase from Staphylococcus aureus (strain bovine RF122 / ET3-1).